We begin with the raw amino-acid sequence, 341 residues long: UPF0324 membrane protein SMU_2059c (341 aa).

A run of 11 helical transmembrane segments spans residues 7–24 (KLSGLVLCFLIALPAWFL), 28–47 (FPLVGAPVFAIFLGMLLAIF), 68–85 (FAVVLLGFGLNLSQVLTV), 90–107 (LPIIVATISSSLLLAFLL), 120–142 (LVGVGSSICGGSAIAATAPVIQA), 147–169 (IAQSISVIFLFNILAALIFPTLG), 178–200 (GFALFAGTAVNDTSSVTATAAAW), 211–233 (GATIVKLTRTLAIIPITLGLSFY), 254–276 (VFPMFILYFILASIITTILTALG), 291–310 (FCIVMAMGAIGLNTNIVKLV), and 317–339 (IVLGASCWIVITLVSLGMQHLLG).

It belongs to the UPF0324 family.

The protein localises to the cell membrane. This is UPF0324 membrane protein SMU_2059c from Streptococcus mutans serotype c (strain ATCC 700610 / UA159).